The chain runs to 169 residues: Large ribosomal subunit protein uL10 (169 aa).

This sequence belongs to the universal ribosomal protein uL10 family. Part of the ribosomal stalk of the 50S ribosomal subunit. The N-terminus interacts with L11 and the large rRNA to form the base of the stalk. The C-terminus forms an elongated spine to which L12 dimers bind in a sequential fashion forming a multimeric L10(L12)X complex.

Functionally, forms part of the ribosomal stalk, playing a central role in the interaction of the ribosome with GTP-bound translation factors. The polypeptide is Large ribosomal subunit protein uL10 (Orientia tsutsugamushi (strain Ikeda) (Rickettsia tsutsugamushi)).